The chain runs to 189 residues: Orcokinin peptides (189 aa).

Positions 1 to 21 (MRGAGGALAVAVAALLVCCSA) are cleaved as a signal peptide. 2 consecutive propeptides follow at residues 22–124 (DPHQ…TFVK) and 145–174 (FYHL…PIGS).

Belongs to the orcokinin family. As to expression, orcokinin-like peptide: Expressed in corpora cardiaca (CC), corpora allata (CA), antennal lobe (AL) and gnathal ganglion (GNG) (at protein level). Expression in CC, CA and GNG detected in some animals, in AL in few animals (at protein level). Orcokinin-like peptide precursor-related peptide: Expressed in corpora cardiaca (CC), corpora allata (CA), antennal lobe (AL) and gnathal ganglion (GNG) (at protein level). Expression in GNG detected in most animals, expression in CC, CA and AL detected in some animals (at protein level).

It is found in the secreted. Its function is as follows. Myotropic peptides. The chain is Orcokinin peptides from Agrotis ipsilon (Black cutworm moth).